Reading from the N-terminus, the 423-residue chain is Histidine--tRNA ligase (423 aa).

Belongs to the class-II aminoacyl-tRNA synthetase family. In terms of assembly, homodimer.

Its subcellular location is the cytoplasm. The catalysed reaction is tRNA(His) + L-histidine + ATP = L-histidyl-tRNA(His) + AMP + diphosphate + H(+). This chain is Histidine--tRNA ligase (hisS), found in Mycobacterium bovis (strain ATCC BAA-935 / AF2122/97).